Reading from the N-terminus, the 84-residue chain is MGGISIWQLLIIAVIVILLFGTKKLRGMGGDLGSAVKGFKKAMSDEDKPADKKDADFEPKNIEQQKTEASAETTAETKKDKEQA.

Residues 1-21 (MGGISIWQLLIIAVIVILLFG) traverse the membrane as a helical segment. Residues 40-84 (KKAMSDEDKPADKKDADFEPKNIEQQKTEASAETTAETKKDKEQA) form a disordered region. 2 stretches are compositionally biased toward basic and acidic residues: residues 42 to 66 (AMSD…EQQK) and 75 to 84 (AETKKDKEQA).

It belongs to the TatA/E family. The Tat system comprises two distinct complexes: a TatABC complex, containing multiple copies of TatA, TatB and TatC subunits, and a separate TatA complex, containing only TatA subunits. Substrates initially bind to the TatABC complex, which probably triggers association of the separate TatA complex to form the active translocon.

Its subcellular location is the cell inner membrane. Functionally, part of the twin-arginine translocation (Tat) system that transports large folded proteins containing a characteristic twin-arginine motif in their signal peptide across membranes. TatA could form the protein-conducting channel of the Tat system. This Vibrio atlanticus (strain LGP32) (Vibrio splendidus (strain Mel32)) protein is Sec-independent protein translocase protein TatA.